We begin with the raw amino-acid sequence, 242 residues long: MEPKYQRILIKLSGEALAGDKGVGIDIPTVQSIAKEIAEVHNSGVQIALVIGGGNLWRGEPAAEAGMDRVQADYTGMLGTVMNALVMADSLQQYGVDTRVQTAIPMQTVAEPYVRGRALRHLEKNRIVVFGAGIGSPYFSTDTTAALRAAEIEAEAILMAKNGVDGVYNADPKKDANAVKFDELTHVEVIKRGLKIMDATASTISMDNDIDLVVFNMNETGNIKRVVLGEQIGTTVSNKASE.

11 to 14 (KLSG) serves as a coordination point for ATP. The involved in allosteric activation by GTP stretch occupies residues 19 to 24 (GDKGVG). A UMP-binding site is contributed by Gly-53. Residues Gly-54 and Arg-58 each contribute to the ATP site. Residues Asp-73 and 134-141 (IGSPYFST) each bind UMP. ATP-binding residues include Asn-162, Tyr-168, and Asp-171.

This sequence belongs to the UMP kinase family. In terms of assembly, homohexamer.

Its subcellular location is the cytoplasm. The catalysed reaction is UMP + ATP = UDP + ADP. Its pathway is pyrimidine metabolism; CTP biosynthesis via de novo pathway; UDP from UMP (UMPK route): step 1/1. Its activity is regulated as follows. Allosterically activated by GTP. Inhibited by UTP. Functionally, catalyzes the reversible phosphorylation of UMP to UDP. The sequence is that of Uridylate kinase from Streptococcus agalactiae serotype Ia (strain ATCC 27591 / A909 / CDC SS700).